Here is a 505-residue protein sequence, read N- to C-terminus: uncharacterized protein (505 aa).

A helical transmembrane segment spans residues 11–27 (IGIIGGGIVGWLAAIAL).

It localises to the membrane. This is an uncharacterized protein from Sinorhizobium fredii (strain NBRC 101917 / NGR234).